Reading from the N-terminus, the 141-residue chain is Cystatin (141 aa).

The signal sequence occupies residues 1–26 (MVHSQLPVAAPLRLLCALLLLPSATM). Residues 29–129 (GGISPRSVTD…CHFQVWSRPW (101 aa)) enclose the Cystatin domain. A Secondary area of contact motif is present at residues 73–77 (QVVAG). 2 disulfides stabilise this stretch: Cys-91–Cys-107 and Cys-120–Cys-140.

It belongs to the cystatin family. In terms of tissue distribution, expressed by the venom gland at an extremely low level (at protein level).

It is found in the secreted. Its function is as follows. Inhibits various C1 cysteine proteases including cathepsin L, papain and cathepsin B. This protein has no toxic activity and its function in the venom is unknown. It may play a role as a housekeeping or regulatory protein. The chain is Cystatin from Oxyuranus microlepidotus (Inland taipan).